The following is a 130-amino-acid chain: U-scoloptoxin(16)-Er4a (130 aa).

Residues 1 to 26 (MNTVSVVQFLAVGCAVFVLYGRGVFA) form the signal peptide.

The protein belongs to the scoloptoxin-16 family. Post-translationally, contains 3 disulfide bonds. Expressed by the venom gland.

It is found in the secreted. This Ethmostigmus rubripes (Giant centipede) protein is U-scoloptoxin(16)-Er4a.